The primary structure comprises 235 residues: MAQTLNRSLTDLGALLHLVDPTLPIGGFNHSNGLETFVQQRVVESKATLEEYVQTQLLQNWIYNDGAYLSLAFDAMCEGNFDRLCELDWQLSATKVARESREGSFKLGVRLLKIFIRYETHTLLTAYQQAIAEKRVQGYFPIVFAMVAQAMGLSKADTLYAFYYNAAVGVITNGVKLIPLSQMDGQDILFDLRGSLVQAVELSLDPDEEWLGAATLANDIRAMQHEVLYTRLYMS.

Belongs to the UreF family. In terms of assembly, ureD, UreF and UreG form a complex that acts as a GTP-hydrolysis-dependent molecular chaperone, activating the urease apoprotein by helping to assemble the nickel containing metallocenter of UreC. The UreE protein probably delivers the nickel.

It localises to the cytoplasm. Required for maturation of urease via the functional incorporation of the urease nickel metallocenter. The chain is Urease accessory protein UreF from Haemophilus influenzae (strain ATCC 51907 / DSM 11121 / KW20 / Rd).